The following is a 484-amino-acid chain: ATP synthase subunit beta (484 aa).

The disordered stretch occupies residues 104-123 (ERGPIGSKQTMPIHADAPPF). 156 to 163 (GGAGVGKT) serves as a coordination point for ATP.

It belongs to the ATPase alpha/beta chains family. F-type ATPases have 2 components, CF(1) - the catalytic core - and CF(0) - the membrane proton channel. CF(1) has five subunits: alpha(3), beta(3), gamma(1), delta(1), epsilon(1). CF(0) has three main subunits: a(1), b(2) and c(9-12). The alpha and beta chains form an alternating ring which encloses part of the gamma chain. CF(1) is attached to CF(0) by a central stalk formed by the gamma and epsilon chains, while a peripheral stalk is formed by the delta and b chains.

Its subcellular location is the cell inner membrane. The catalysed reaction is ATP + H2O + 4 H(+)(in) = ADP + phosphate + 5 H(+)(out). Produces ATP from ADP in the presence of a proton gradient across the membrane. The catalytic sites are hosted primarily by the beta subunits. This Zymomonas mobilis subsp. mobilis (strain ATCC 31821 / ZM4 / CP4) protein is ATP synthase subunit beta.